The chain runs to 258 residues: Peroxisomal membrane protein 11B (258 aa).

Residue Lys43 is modified to N6-acetyllysine. Residues 210–258 (VVRNACDLFIPLDKLGLWRCGPGIVGLCGLVSSILSILTLICPWLRLKP) are interaction with PEX19, PEX11G and FIS1 and peroxisome targeting. A helical transmembrane segment spans residues 232–254 (GIVGLCGLVSSILSILTLICPWL).

It belongs to the peroxin-11 family. In terms of assembly, homodimer. Heterodimer with PEX11G. Interacts with PEX19. Interacts with FIS1.

It localises to the peroxisome membrane. In terms of biological role, involved in peroxisomal proliferation. May regulate peroxisome division by recruiting the dynamin-related GTPase DNM1L to the peroxisomal membrane. Promotes membrane protrusion and elongation on the peroxisomal surface. This Bos taurus (Bovine) protein is Peroxisomal membrane protein 11B (PEX11B).